The sequence spans 751 residues: Photosystem I P700 chlorophyll a apoprotein A1 (751 aa).

A run of 8 helical transmembrane segments spans residues 72–95 (IFSA…FHGA), 158–181 (LYCT…FHYH), 197–221 (MNHH…HVSM), 293–311 (TAHH…GHMY), 348–371 (WHAQ…QHMY), 387–413 (LSLF…IFMV), 435–457 (AIIS…LYIH), and 532–550 (FMVH…LILL). [4Fe-4S] cluster is bound by residues C574 and C583. Transmembrane regions (helical) follow at residues 590-611 (HVFL…HFSW) and 665-687 (LSAY…MFLF). A chlorophyll a'-binding site is contributed by H676. Chlorophyll a contacts are provided by M684 and Y692. Phylloquinone is bound at residue W693. Residues 725-745 (AVGVAHYLLGGIVTTWAFFLA) traverse the membrane as a helical segment.

Belongs to the PsaA/PsaB family. The PsaA/B heterodimer binds the P700 chlorophyll special pair and subsequent electron acceptors. PSI consists of a core antenna complex that captures photons, and an electron transfer chain that converts photonic excitation into a charge separation. The cyanobacterial PSI reaction center is composed of one copy each of PsaA,B,C,D,E,F,I,J,K,L,M and X, and forms trimeric complexes. It depends on PSI electron transfer chain: 5 chlorophyll a, 1 chlorophyll a', 2 phylloquinones and 3 4Fe-4S clusters. PSI core antenna: 90 chlorophyll a, 22 carotenoids, 3 phospholipids and 1 galactolipid. P700 is a chlorophyll a/chlorophyll a' dimer, A0 is one or more chlorophyll a, A1 is one or both phylloquinones and FX is a shared 4Fe-4S iron-sulfur center. as a cofactor.

The protein resides in the cellular thylakoid membrane. It catalyses the reaction reduced [plastocyanin] + hnu + oxidized [2Fe-2S]-[ferredoxin] = oxidized [plastocyanin] + reduced [2Fe-2S]-[ferredoxin]. Functionally, psaA and PsaB bind P700, the primary electron donor of photosystem I (PSI), as well as the electron acceptors A0, A1 and FX. PSI is a plastocyanin/cytochrome c6-ferredoxin oxidoreductase, converting photonic excitation into a charge separation, which transfers an electron from the donor P700 chlorophyll pair to the spectroscopically characterized acceptors A0, A1, FX, FA and FB in turn. Oxidized P700 is reduced on the lumenal side of the thylakoid membrane by plastocyanin or cytochrome c6. The sequence is that of Photosystem I P700 chlorophyll a apoprotein A1 from Synechocystis sp. (strain ATCC 27184 / PCC 6803 / Kazusa).